Consider the following 557-residue polypeptide: Urocanate hydratase (557 aa).

The segment at 1–20 (MSNPRHNEREVRSPRGDELN) is disordered. Residues 52–53 (GG), glutamine 130, 176–178 (GMG), glutamate 196, arginine 201, 242–243 (NA), 263–267 (QTSAH), 273–274 (YL), and tyrosine 322 each bind NAD(+). Cysteine 410 is a catalytic residue. Glycine 492 contacts NAD(+).

Belongs to the urocanase family. It depends on NAD(+) as a cofactor.

It localises to the cytoplasm. The enzyme catalyses 4-imidazolone-5-propanoate = trans-urocanate + H2O. It participates in amino-acid degradation; L-histidine degradation into L-glutamate; N-formimidoyl-L-glutamate from L-histidine: step 2/3. Catalyzes the conversion of urocanate to 4-imidazolone-5-propionate. The polypeptide is Urocanate hydratase (Brucella melitensis biotype 1 (strain ATCC 23456 / CCUG 17765 / NCTC 10094 / 16M)).